A 102-amino-acid chain; its full sequence is Small ribosomal subunit protein uS10 (102 aa).

This sequence belongs to the universal ribosomal protein uS10 family. As to quaternary structure, part of the 30S ribosomal subunit.

Involved in the binding of tRNA to the ribosomes. This chain is Small ribosomal subunit protein uS10, found in Bifidobacterium longum subsp. infantis (strain ATCC 15697 / DSM 20088 / JCM 1222 / NCTC 11817 / S12).